The chain runs to 114 residues: Kita-kyushu lung cancer antigen 1 homolog (114 aa).

Topologically, residues Met-1 to Tyr-4 are cytoplasmic. A helical; Signal-anchor for type II membrane protein transmembrane segment spans residues Leu-5–Tyr-22. Over Arg-23–Thr-114 the chain is Extracellular. A glycan (N-linked (GlcNAc...) asparagine) is linked at Asn-84.

It localises to the cell membrane. The polypeptide is Kita-kyushu lung cancer antigen 1 homolog (CT83) (Macaca fascicularis (Crab-eating macaque)).